A 364-amino-acid chain; its full sequence is Probable tartrate dehydrogenase/decarboxylase TtuC (364 aa).

Residues Asp222, Asp246, and Asp250 each coordinate Mn(2+).

This sequence belongs to the isocitrate and isopropylmalate dehydrogenases family. Mg(2+) is required as a cofactor. The cofactor is Mn(2+). Requires K(+) as cofactor.

The protein localises to the cytoplasm. The catalysed reaction is tartrate + NAD(+) = 2-hydroxy-3-oxosuccinate + NADH + H(+). It catalyses the reaction (2R,3S)-tartrate + NAD(+) = 2-hydroxy-3-oxosuccinate + NADH + H(+). The enzyme catalyses (2R,3R)-tartrate + NAD(+) = 2-hydroxy-3-oxosuccinate + NADH + H(+). It carries out the reaction (2R,3R)-tartrate + H(+) = (R)-glycerate + CO2. The catalysed reaction is (R)-malate + NAD(+) = pyruvate + CO2 + NADH. It participates in carbohydrate acid metabolism; tartrate degradation; 2-hydroxy-3-oxosuccinate from L-tartrate: step 1/1. The protein operates within carbohydrate acid metabolism; tartrate degradation; 2-hydroxy-3-oxosuccinate from meso-tartrate: step 1/1. Its pathway is carbohydrate acid metabolism; tartrate degradation; D-glycerate from L-tartrate: step 1/1. In terms of biological role, has multiple catalytic activities. Apart from catalyzing the oxidation of (+)-tartrate to oxaloglycolate, also converts meso-tartrate to D-glycerate and catalyzes the oxidative decarboxylation of D-malate to pyruvate. The polypeptide is Probable tartrate dehydrogenase/decarboxylase TtuC (ttuC) (Agrobacterium vitis (Rhizobium vitis)).